The primary structure comprises 453 residues: GTPase Der (453 aa).

EngA-type G domains are found at residues 4 to 169 and 177 to 352; these read PIVA…PPVT and IKIA…EEHK. Residues 10–17, 57–61, 120–123, 183–190, 230–234, and 295–298 each bind GTP; these read GRPNVGKS, DTGGL, NKCE, DTAGI, and NKWD. Residues 353–438 enclose the KH-like domain; sequence RRVSTSVINE…PIRLLWRSKK (86 aa).

Belongs to the TRAFAC class TrmE-Era-EngA-EngB-Septin-like GTPase superfamily. EngA (Der) GTPase family. In terms of assembly, associates with the 50S ribosomal subunit.

GTPase that plays an essential role in the late steps of ribosome biogenesis. This is GTPase Der from Nostoc sp. (strain PCC 7120 / SAG 25.82 / UTEX 2576).